The chain runs to 235 residues: 15,16-dihydrobiliverdin:ferredoxin oxidoreductase (235 aa).

It belongs to the HY2 family.

The enzyme catalyses 15,16-dihydrobiliverdin + oxidized 2[4Fe-4S]-[ferredoxin] = biliverdin IXalpha + reduced 2[4Fe-4S]-[ferredoxin] + 2 H(+). In terms of biological role, catalyzes the two-electron reduction of biliverdin IX-alpha at the C15 methine bridge. The chain is 15,16-dihydrobiliverdin:ferredoxin oxidoreductase (pebA) from Parasynechococcus marenigrum (strain WH8102).